Reading from the N-terminus, the 119-residue chain is Short coiled-coil protein A (119 aa).

The segment covering 1–10 (MEGDVDEDDG) has biased composition (acidic residues). Positions 1–26 (MEGDVDEDDGTFTNISLADDSADGEP) are disordered. Residues 48–95 (MENQVEQEEKTRLINQVLELQHTLEDLSARVDAVKEENLKLKSENQVL) adopt a coiled-coil conformation.

The protein belongs to the SCOC family.

The protein resides in the golgi apparatus membrane. The protein localises to the golgi apparatus. Its subcellular location is the trans-Golgi network. It is found in the cytoplasm. It localises to the cytosol. Positive regulator of amino acid starvation-induced autophagy. In Danio rerio (Zebrafish), this protein is Short coiled-coil protein A (scoca).